A 356-amino-acid chain; its full sequence is Carminomycin 4-O-methyltransferase DauK (356 aa).

Arginine 153 contributes to the S-adenosyl-L-methionine binding site. Residue aspartate 163 coordinates substrate. Residues glycine 187, glutamate 210, 237–238 (DF), and serine 252 each bind S-adenosyl-L-methionine. 2 residues coordinate substrate: asparagine 257 and arginine 303.

The protein belongs to the class I-like SAM-binding methyltransferase superfamily. Cation-independent O-methyltransferase family. As to quaternary structure, homodimer and homotetramer in equilibrium.

The catalysed reaction is carminomycin + S-adenosyl-L-methionine = daunorubicin + S-adenosyl-L-homocysteine + H(+). It functions in the pathway antibiotic biosynthesis; daunorubicin biosynthesis. Its pathway is antibiotic biosynthesis; carminomycin biosynthesis. Strongly inhibited by S-adenosyl-L-homocysteine and weakly by adenine and methionine. Its function is as follows. Involved in the biosynthesis of the anthracyclines carminomycin and daunorubicin (daunomycin) which are aromatic polyketide antibiotics that exhibit high cytotoxicity and are widely applied in the chemotherapy of a variety of cancers. In vivo, catalyzes the transfer of a methyl group from S-adenosyl-L-methionine to the 4-O-position of carminomycin to form daunorubicin. In vitro, it also methylates the anthracyclines rhodomycin D (10-carbomethoxy-13-deoxycarminomycin), 10-carboxy-13-deoxycarminomycin, 13-deoxy-carminomycin and 13-dihydrocarminomycin at the 4-hydroxyl position. This is Carminomycin 4-O-methyltransferase DauK (dauK) from Streptomyces sp. (strain C5).